A 729-amino-acid chain; its full sequence is Fatty acid oxidation complex subunit alpha (729 aa).

The segment at 1–189 (MLYKGDTLYL…KIGLVDGVVK (189 aa)) is enoyl-CoA hydratase/isomerase. Asp296 lines the substrate pocket. The 3-hydroxyacyl-CoA dehydrogenase stretch occupies residues 311-729 (ETPKQAAVLG…ARPVGDLKTA (419 aa)). Residues Met324, Asp343, 400 to 402 (IVE), Lys407, and Ser429 each bind NAD(+). His450 (for 3-hydroxyacyl-CoA dehydrogenase activity) is an active-site residue. Asn453 contacts NAD(+). Substrate contacts are provided by Asn500 and Tyr660. Residues 708–729 (RHNEPYYPPVEPARPVGDLKTA) are disordered.

It in the N-terminal section; belongs to the enoyl-CoA hydratase/isomerase family. The protein in the C-terminal section; belongs to the 3-hydroxyacyl-CoA dehydrogenase family. Heterotetramer of two alpha chains (FadB) and two beta chains (FadA).

It carries out the reaction a (3S)-3-hydroxyacyl-CoA + NAD(+) = a 3-oxoacyl-CoA + NADH + H(+). The catalysed reaction is a (3S)-3-hydroxyacyl-CoA = a (2E)-enoyl-CoA + H2O. It catalyses the reaction a 4-saturated-(3S)-3-hydroxyacyl-CoA = a (3E)-enoyl-CoA + H2O. The enzyme catalyses (3S)-3-hydroxybutanoyl-CoA = (3R)-3-hydroxybutanoyl-CoA. It carries out the reaction a (3Z)-enoyl-CoA = a 4-saturated (2E)-enoyl-CoA. The catalysed reaction is a (3E)-enoyl-CoA = a 4-saturated (2E)-enoyl-CoA. It participates in lipid metabolism; fatty acid beta-oxidation. In terms of biological role, involved in the aerobic and anaerobic degradation of long-chain fatty acids via beta-oxidation cycle. Catalyzes the formation of 3-oxoacyl-CoA from enoyl-CoA via L-3-hydroxyacyl-CoA. It can also use D-3-hydroxyacyl-CoA and cis-3-enoyl-CoA as substrate. This is Fatty acid oxidation complex subunit alpha from Escherichia coli O157:H7.